The sequence spans 628 residues: DNA mismatch repair protein MutL (628 aa).

The tract at residues 335-411 (SVDIEPESEQ…ASRNSEVSLP (77 aa)) is disordered. The span at 343–353 (EQTTAWQTSPT) shows a compositional bias: polar residues.

It belongs to the DNA mismatch repair MutL/HexB family.

Functionally, this protein is involved in the repair of mismatches in DNA. It is required for dam-dependent methyl-directed DNA mismatch repair. May act as a 'molecular matchmaker', a protein that promotes the formation of a stable complex between two or more DNA-binding proteins in an ATP-dependent manner without itself being part of a final effector complex. The protein is DNA mismatch repair protein MutL of Shewanella pealeana (strain ATCC 700345 / ANG-SQ1).